The following is a 256-amino-acid chain: Ras-related protein RabJ (256 aa).

Residue 16 to 23 (GSSDVGKT) participates in GTP binding. The Effector region motif lies at 38–46 (LTSTIGASF). GTP-binding positions include 64–68 (DSAGQ) and 122–125 (NKID). Residues 229–256 (NGHLQGSINGHNNQNSTNYSDNSDQCCG) are disordered. The segment covering 230 to 256 (GHLQGSINGHNNQNSTNYSDNSDQCCG) has biased composition (polar residues). 2 S-geranylgeranyl cysteine lipidation sites follow: Cys254 and Cys255.

The protein belongs to the small GTPase superfamily. Rab family.

It is found in the cell membrane. In Dictyostelium discoideum (Social amoeba), this protein is Ras-related protein RabJ (rabJ).